Consider the following 223-residue polypeptide: Small ribosomal subunit protein uS3 (223 aa).

The 70-residue stretch at I39–K108 folds into the KH type-2 domain.

The protein belongs to the universal ribosomal protein uS3 family. As to quaternary structure, part of the 30S ribosomal subunit. Forms a tight complex with proteins S10 and S14.

Functionally, binds the lower part of the 30S subunit head. Binds mRNA in the 70S ribosome, positioning it for translation. In Clostridium botulinum (strain Okra / Type B1), this protein is Small ribosomal subunit protein uS3.